The following is a 32-amino-acid chain: Cytochrome b6-f complex subunit 8 (32 aa).

The chain crosses the membrane as a helical span at residues 6–26; it reads IVGITWAALMVVFTFSLSLVV.

This sequence belongs to the PetN family. As to quaternary structure, the 4 large subunits of the cytochrome b6-f complex are cytochrome b6, subunit IV (17 kDa polypeptide, PetD), cytochrome f and the Rieske protein, while the 4 small subunits are PetG, PetL, PetM and PetN. The complex functions as a dimer.

It is found in the plastid. It localises to the chloroplast thylakoid membrane. Functionally, component of the cytochrome b6-f complex, which mediates electron transfer between photosystem II (PSII) and photosystem I (PSI), cyclic electron flow around PSI, and state transitions. This Pinus koraiensis (Korean pine) protein is Cytochrome b6-f complex subunit 8.